Consider the following 204-residue polypeptide: AFG2-interacting ribosome maturation factor (204 aa).

Part of the 55LCC heterohexameric ATPase complex. Does not associate with pre-60S ribosomal particles.

It is found in the nucleus. The protein resides in the cytoplasm. In terms of biological role, part of the 55LCC heterohexameric ATPase complex which is chromatin-associated and promotes replisome proteostasis to maintain replication fork progression and genome stability. Required for replication fork progression, sister chromatid cohesion, and chromosome stability. The ATPase activity is specifically enhanced by replication fork DNA and is coupled to cysteine protease-dependent cleavage of replisome substrates in response to replication fork damage. Uses ATPase activity to process replisome substrates in S-phase, facilitating their proteolytic turnover from chromatin to ensure DNA replication and mitotic fidelity. Involved in the cytoplasmic maturation steps of pre-60S ribosomal particles by promoting the release of shuttling protein RSL24D1/RLP24 from the pre-ribosomal particles. This chain is AFG2-interacting ribosome maturation factor (airim), found in Xenopus tropicalis (Western clawed frog).